The chain runs to 653 residues: Bifunctional lysine-specific demethylase and histidyl-hydroxylase NO66 (653 aa).

Low complexity predominate over residues 1–12 (MKKATTSAAAKS). Disordered regions lie at residues 1–50 (MKKA…DMLA) and 65–137 (FDDD…LERT). Residues 13–26 (QGNSKMQKNANNGT) show a composition bias toward polar residues. Residue S44 is modified to Phosphoserine. Over residues 72-86 (STSKKTQSGSAAAAK) the composition is skewed to low complexity. A Phosphoserine modification is found at S131. T137 is modified (phosphothreonine). A Phosphoserine modification is found at S138. Residues 184–208 (AEPTEEGNNNNDEKETETIETHKAD) are disordered. Residues 194-208 (NDEKETETIETHKAD) are compositionally biased toward basic and acidic residues. One can recognise a JmjC domain in the interval 300-450 (FYSDGCSIRL…NLLETLMPMV (151 aa)). Positions 351, 353, and 416 each coordinate Fe cation.

It belongs to the ROX family. NO66 subfamily. The cofactor is Fe(2+).

The protein resides in the nucleus. The catalysed reaction is N(6),N(6)-dimethyl-L-lysyl(36)-[histone H3] + 2 2-oxoglutarate + 2 O2 = L-lysyl(36)-[histone H3] + 2 formaldehyde + 2 succinate + 2 CO2. Its function is as follows. Oxygenase that can act as both a histone lysine demethylase and a ribosomal histidine hydroxylase. Specifically demethylates 'Lys-4' (H3K4me) and 'Lys-36' (H3K36me) of histone H3, thereby playing a central role in histone code. The polypeptide is Bifunctional lysine-specific demethylase and histidyl-hydroxylase NO66 (Drosophila melanogaster (Fruit fly)).